A 291-amino-acid polypeptide reads, in one-letter code: Beta-lactamase CTX-M-1 (291 aa).

An N-terminal signal peptide occupies residues 1–28 (MVKKSLRQFTLMATATVTLLLGSVPLYA). Residue serine 73 is the Nucleophile; acyl-ester intermediate of the active site. A beta-lactam is bound by residues lysine 76, serine 133, glutamate 169, and serine 240. The Proton acceptor role is filled by glutamate 169.

It belongs to the class-A beta-lactamase family. Monomer.

It localises to the secreted. It catalyses the reaction a beta-lactam + H2O = a substituted beta-amino acid. Inhibited by the beta-lactamase-blocking agent clavulanic acid; in the TG1 strain. Its function is as follows. Extended-spectrum beta-lactamase (ESBL) which confers resistance to penicillins, as well as first, second and third-generation cephalosporins. Has cefotaxime-hydrolyzing activity. Inactive against the cephamycin antibiotic, cefoxitin, or against the carbapenem, imipenem. The polypeptide is Beta-lactamase CTX-M-1 (Escherichia coli).